The primary structure comprises 220 residues: Thiopurine S-methyltransferase (220 aa).

S-adenosyl-L-methionine is bound by residues Trp10, Leu45, Glu66, and Arg123.

It belongs to the class I-like SAM-binding methyltransferase superfamily. TPMT family.

Its subcellular location is the cytoplasm. The enzyme catalyses S-adenosyl-L-methionine + a thiopurine = S-adenosyl-L-homocysteine + a thiopurine S-methylether.. This Nitrosospira multiformis (strain ATCC 25196 / NCIMB 11849 / C 71) protein is Thiopurine S-methyltransferase.